The sequence spans 285 residues: MTNHDLASLSQTIETAFEGRDAVNTGTRGAVRDAVETALNLLDSGKVRVAERSEDGTWTVNQWLKKAVLLSFRLNPMELVRGGPGEAVWWDKVASKFDGWSVNEFEKAGFRAVPNCVVRRSAYIAPNAVLMPSFVNLGAYVGEGTMVDTWATVGSCAQIGKNVHLSGGVGIGGVLEPMQAGPTIIEDNCFIGARSEVVEGCIVREGSVLGMGVFIGKSTKIVDRATGEVMYGEVPPYSVVVAGSMASGSTMANGQPAPNLYCAVIVKRVDEKTRSKTGINELLRD.

Positions 111 and 148 each coordinate substrate.

It belongs to the transferase hexapeptide repeat family. In terms of assembly, homotrimer.

Its subcellular location is the cytoplasm. The enzyme catalyses (S)-2,3,4,5-tetrahydrodipicolinate + succinyl-CoA + H2O = (S)-2-succinylamino-6-oxoheptanedioate + CoA. It participates in amino-acid biosynthesis; L-lysine biosynthesis via DAP pathway; LL-2,6-diaminopimelate from (S)-tetrahydrodipicolinate (succinylase route): step 1/3. The polypeptide is 2,3,4,5-tetrahydropyridine-2,6-dicarboxylate N-succinyltransferase (Rhizobium meliloti (strain 1021) (Ensifer meliloti)).